The following is a 570-amino-acid chain: Proline--tRNA ligase (570 aa).

This sequence belongs to the class-II aminoacyl-tRNA synthetase family. ProS type 1 subfamily. Homodimer.

The protein resides in the cytoplasm. It carries out the reaction tRNA(Pro) + L-proline + ATP = L-prolyl-tRNA(Pro) + AMP + diphosphate. Its function is as follows. Catalyzes the attachment of proline to tRNA(Pro) in a two-step reaction: proline is first activated by ATP to form Pro-AMP and then transferred to the acceptor end of tRNA(Pro). As ProRS can inadvertently accommodate and process non-cognate amino acids such as alanine and cysteine, to avoid such errors it has two additional distinct editing activities against alanine. One activity is designated as 'pretransfer' editing and involves the tRNA(Pro)-independent hydrolysis of activated Ala-AMP. The other activity is designated 'posttransfer' editing and involves deacylation of mischarged Ala-tRNA(Pro). The misacylated Cys-tRNA(Pro) is not edited by ProRS. The sequence is that of Proline--tRNA ligase from Neisseria meningitidis serogroup C / serotype 2a (strain ATCC 700532 / DSM 15464 / FAM18).